The chain runs to 637 residues: tRNA 5-methylaminomethyl-2-thiouridine biosynthesis bifunctional protein MnmC (637 aa).

Residues 1–20 (MSERIEWLEDGTAGGSPYSP) are disordered. The tract at residues 1 to 232 (MSERIEWLED…KRDNLQGEYQ (232 aa)) is tRNA (mnm(5)s(2)U34)-methyltransferase. An FAD-dependent cmnm(5)s(2)U34 oxidoreductase region spans residues 255–637 (IGAGLAGSAV…YATRLQPSGS (383 aa)).

This sequence in the N-terminal section; belongs to the methyltransferase superfamily. tRNA (mnm(5)s(2)U34)-methyltransferase family. In the C-terminal section; belongs to the DAO family. It depends on FAD as a cofactor.

It is found in the cytoplasm. The enzyme catalyses 5-aminomethyl-2-thiouridine(34) in tRNA + S-adenosyl-L-methionine = 5-methylaminomethyl-2-thiouridine(34) in tRNA + S-adenosyl-L-homocysteine + H(+). Functionally, catalyzes the last two steps in the biosynthesis of 5-methylaminomethyl-2-thiouridine (mnm(5)s(2)U) at the wobble position (U34) in tRNA. Catalyzes the FAD-dependent demodification of cmnm(5)s(2)U34 to nm(5)s(2)U34, followed by the transfer of a methyl group from S-adenosyl-L-methionine to nm(5)s(2)U34, to form mnm(5)s(2)U34. This chain is tRNA 5-methylaminomethyl-2-thiouridine biosynthesis bifunctional protein MnmC, found in Polaromonas naphthalenivorans (strain CJ2).